The chain runs to 667 residues: MTLLESIEGPEDLKGLDAAAMEQLAGEIRDFLISHVSATGGHLGPNLGVVELTLAVHRVFSSPRDSVVFDTGHQSYVHKLLTGRQDFDTLRQEGGLAGYPSRAESEHDIVESSHASSSLSWADGISRGYALTGQHDRHTVAVIGDGALTGGMAWEAVNNIASDRDRKVVIVVNDNGRSYAPTVGGFANHLKDLQASVQQGVDAVRTDRRYEQTLAKAKHLLTASGHLGQAVYRGLHGMKQGIKDVVIPQGIFEDLGMKYVGPVDGHDLAAMEQALTNARNFGGPVIVHAITEKGHGYLPARLDENDQFHSVPVIDPATGKPTGAASARTWTHVFRDEIAAIADERPDVVGITGAMLIPMGLQKMQLAHPERVVDVGIAEQHALTMAAGMAFSGLHPVVGLYATFLNRGFDQLLMDVALHHAGVTVVLDRAGVTGPDGPSHHGMWDLALLQIVPGLHLAAPRDEATMVEELREAVAVSDAPTVVRYPKGAVGAPLPALERFPDGVDVLARNGEAGGPQGEQRDVLIVGVGAMCVTALEVSERLAAHGVSSTVLDPRWVLPVADSVVRTAARHRIVVVIEDGVRAGGIGSLIRQQMRAQGVDTALNEVGLPTEFLEHASRDQILEHTGVTAQRIAQDTLASVLGTRVPYARPAHDDAAAPVSSSGPEPR.

Thiamine diphosphate is bound by residues His73 and 113–115 (SHA). Asp145 is a Mg(2+) binding site. Thiamine diphosphate is bound by residues 146 to 147 (GA), Asn175, Tyr297, and Glu379. Asn175 contacts Mg(2+).

The protein belongs to the transketolase family. DXPS subfamily. As to quaternary structure, homodimer. Mg(2+) serves as cofactor. Thiamine diphosphate is required as a cofactor.

The catalysed reaction is D-glyceraldehyde 3-phosphate + pyruvate + H(+) = 1-deoxy-D-xylulose 5-phosphate + CO2. The protein operates within metabolic intermediate biosynthesis; 1-deoxy-D-xylulose 5-phosphate biosynthesis; 1-deoxy-D-xylulose 5-phosphate from D-glyceraldehyde 3-phosphate and pyruvate: step 1/1. Its function is as follows. Catalyzes the acyloin condensation reaction between C atoms 2 and 3 of pyruvate and glyceraldehyde 3-phosphate to yield 1-deoxy-D-xylulose-5-phosphate (DXP). This is 1-deoxy-D-xylulose-5-phosphate synthase from Kocuria rhizophila (strain ATCC 9341 / DSM 348 / NBRC 103217 / DC2201).